The sequence spans 522 residues: Maturase K (522 aa).

Belongs to the intron maturase 2 family. MatK subfamily.

Its subcellular location is the plastid. The protein localises to the chloroplast. Functionally, usually encoded in the trnK tRNA gene intron. Probably assists in splicing its own and other chloroplast group II introns. The polypeptide is Maturase K (Iris danfordiae (Danford iris)).